We begin with the raw amino-acid sequence, 213 residues long: Phosphoribosylformylglycinamidine synthase subunit PurQ (213 aa).

Residues 5–213 (ACVVVYPGSN…FQSILNYLKR (209 aa)) form the Glutamine amidotransferase type-1 domain. The active-site Nucleophile is Cys86. Residues His186 and Glu188 contribute to the active site.

As to quaternary structure, part of the FGAM synthase complex composed of 1 PurL, 1 PurQ and 2 PurS subunits.

It is found in the cytoplasm. It catalyses the reaction N(2)-formyl-N(1)-(5-phospho-beta-D-ribosyl)glycinamide + L-glutamine + ATP + H2O = 2-formamido-N(1)-(5-O-phospho-beta-D-ribosyl)acetamidine + L-glutamate + ADP + phosphate + H(+). The catalysed reaction is L-glutamine + H2O = L-glutamate + NH4(+). Its pathway is purine metabolism; IMP biosynthesis via de novo pathway; 5-amino-1-(5-phospho-D-ribosyl)imidazole from N(2)-formyl-N(1)-(5-phospho-D-ribosyl)glycinamide: step 1/2. Its function is as follows. Part of the phosphoribosylformylglycinamidine synthase complex involved in the purines biosynthetic pathway. Catalyzes the ATP-dependent conversion of formylglycinamide ribonucleotide (FGAR) and glutamine to yield formylglycinamidine ribonucleotide (FGAM) and glutamate. The FGAM synthase complex is composed of three subunits. PurQ produces an ammonia molecule by converting glutamine to glutamate. PurL transfers the ammonia molecule to FGAR to form FGAM in an ATP-dependent manner. PurS interacts with PurQ and PurL and is thought to assist in the transfer of the ammonia molecule from PurQ to PurL. The chain is Phosphoribosylformylglycinamidine synthase subunit PurQ from Thermotoga maritima (strain ATCC 43589 / DSM 3109 / JCM 10099 / NBRC 100826 / MSB8).